The primary structure comprises 115 residues: Regulator of ribonuclease activity B (115 aa).

The protein belongs to the RraB family. Interacts with the C-terminal region of Rne.

It is found in the cytoplasm. Globally modulates RNA abundance by binding to RNase E (Rne) and regulating its endonucleolytic activity. Can modulate Rne action in a substrate-dependent manner by altering the composition of the degradosome. This is Regulator of ribonuclease activity B from Aeromonas salmonicida (strain A449).